The primary structure comprises 249 residues: RNA polymerase sigma factor SigI3 (249 aa).

Positions 60–73 (EEFSIGLAAFNEAI) match the Polymerase core binding motif. A DNA-binding region (H-T-H motif) is located at residues 199 to 218 (MKEVLSRIKVNHKTIQRNRK).

It belongs to the sigma-70 factor family. SigI subfamily. In terms of assembly, interacts with RsgI3.

The protein resides in the cytoplasm. Its activity is regulated as follows. Negatively regulated by the anti-sigma-I factor RsgI3. Binding of the polysaccharide substrate to RsgI3 may lead to the release and activation of SigI3. Functionally, sigma factors are initiation factors that promote the attachment of RNA polymerase to specific initiation sites and are then released. This sigma factor is involved in regulation of cellulosomal genes via an external polysaccharide-sensing mechanism. Recognizes the predicted promoters associated with sigI3 itself, pl11, ce12 and cipA. This chain is RNA polymerase sigma factor SigI3, found in Acetivibrio thermocellus (strain ATCC 27405 / DSM 1237 / JCM 9322 / NBRC 103400 / NCIMB 10682 / NRRL B-4536 / VPI 7372) (Clostridium thermocellum).